A 90-amino-acid polypeptide reads, in one-letter code: Large ribosomal subunit protein uL23c (90 aa).

Belongs to the universal ribosomal protein uL23 family. In terms of assembly, part of the 50S ribosomal subunit.

Its subcellular location is the plastid. It localises to the chloroplast. Functionally, binds to 23S rRNA. The protein is Large ribosomal subunit protein uL23c (rpl23) of Oltmannsiellopsis viridis (Marine flagellate).